The following is a 693-amino-acid chain: Elongation factor G (693 aa).

The tr-type G domain maps to 8–282 (EKFRNFGIMA…AVVDYLPSPI (275 aa)). GTP is bound by residues 17-24 (AHIDAGKT), 81-85 (DTPGH), and 135-138 (NKMD).

This sequence belongs to the TRAFAC class translation factor GTPase superfamily. Classic translation factor GTPase family. EF-G/EF-2 subfamily.

Its subcellular location is the cytoplasm. Catalyzes the GTP-dependent ribosomal translocation step during translation elongation. During this step, the ribosome changes from the pre-translocational (PRE) to the post-translocational (POST) state as the newly formed A-site-bound peptidyl-tRNA and P-site-bound deacylated tRNA move to the P and E sites, respectively. Catalyzes the coordinated movement of the two tRNA molecules, the mRNA and conformational changes in the ribosome. This is Elongation factor G from Mycoplasmoides gallisepticum (strain R(low / passage 15 / clone 2)) (Mycoplasma gallisepticum).